The chain runs to 149 residues: Nucleoside diphosphate kinase 1 (149 aa).

ATP contacts are provided by lysine 10, phenylalanine 58, arginine 86, threonine 92, arginine 103, and asparagine 113. The active-site Pros-phosphohistidine intermediate is the histidine 116.

The protein belongs to the NDK family. Mg(2+) is required as a cofactor.

It carries out the reaction a 2'-deoxyribonucleoside 5'-diphosphate + ATP = a 2'-deoxyribonucleoside 5'-triphosphate + ADP. It catalyses the reaction a ribonucleoside 5'-diphosphate + ATP = a ribonucleoside 5'-triphosphate + ADP. Major role in the synthesis of nucleoside triphosphates other than ATP. The ATP gamma phosphate is transferred to the NDP beta phosphate via a ping-pong mechanism, using a phosphorylated active-site intermediate. This NDK is microtubule-associated. The sequence is that of Nucleoside diphosphate kinase 1 (NDPK1) from Pisum sativum (Garden pea).